The sequence spans 72 residues: Heat shock factor-binding protein 1-like protein 1 (72 aa).

Residues 12 to 62 (DLLQNAAENLLLEVEEHFQALTTTLNLRMEEMGSRIEDLQRNVDDLMTQAG) are a coiled coil.

It belongs to the HSBP1 family.

The protein is Heat shock factor-binding protein 1-like protein 1 (Hsbp1l1) of Mus musculus (Mouse).